An 86-amino-acid chain; its full sequence is RNA-binding protein Hfq (86 aa).

Positions 9 to 68 (DPYLNTLRKEKVPVSIYLVNGIKLQGSIESFDQFVVLLKNTVSQMVYKHAISTVVPARPV) constitute a Sm domain. Residues 66-86 (RPVRLPSPSDSEHGDSEPGNA) are disordered. The segment covering 75-86 (DSEHGDSEPGNA) has biased composition (basic and acidic residues).

This sequence belongs to the Hfq family. As to quaternary structure, homohexamer.

RNA chaperone that binds small regulatory RNA (sRNAs) and mRNAs to facilitate mRNA translational regulation in response to envelope stress, environmental stress and changes in metabolite concentrations. Also binds with high specificity to tRNAs. The polypeptide is RNA-binding protein Hfq (Pseudomonas putida (strain W619)).